A 201-amino-acid chain; its full sequence is Probable GTP-binding protein EngB (201 aa).

An EngB-type G domain is found at 25–199 (HGIEIAFIGY…KSKLNFWYEK (175 aa)). GTP contacts are provided by residues 33 to 40 (GYSNSGKS), 60 to 64 (GRTQL), 78 to 81 (DLPG), 145 to 148 (TKCD), and 178 to 180 (FSS). The Mg(2+) site is built by Ser-40 and Thr-62.

Belongs to the TRAFAC class TrmE-Era-EngA-EngB-Septin-like GTPase superfamily. EngB GTPase family. Mg(2+) is required as a cofactor.

Necessary for normal cell division and for the maintenance of normal septation. The chain is Probable GTP-binding protein EngB from Buchnera aphidicola subsp. Schizaphis graminum (strain Sg).